Consider the following 352-residue polypeptide: Enhancer of mRNA-decapping protein 1 (352 aa).

Disordered regions lie at residues 1-258 (MMAH…PRNH) and 277-352 (QYPQ…SSKS). A compositionally biased stretch (low complexity) spans 71–80 (HTSSNTSNNK). 2 stretches are compositionally biased toward polar residues: residues 93-104 (NFGNESSHQNGG) and 205-225 (TEPNYHVNPQVNTPPQHSVNV). Residues 289-309 (GGVYPMVAPQYQQQPQQHPQQ) show a composition bias toward low complexity.

The protein belongs to the EDC family.

It is found in the cytoplasm. Its function is as follows. mRNA-binding protein which stimulates mRNA decapping. This chain is Enhancer of mRNA-decapping protein 1 (EDC1), found in Debaryomyces hansenii (strain ATCC 36239 / CBS 767 / BCRC 21394 / JCM 1990 / NBRC 0083 / IGC 2968) (Yeast).